Consider the following 271-residue polypeptide: Transmembrane protein 150A (271 aa).

The Cytoplasmic portion of the chain corresponds to M1–G3. Residues W4–A24 traverse the membrane as a helical segment. Topologically, residues M25–E75 are extracellular. Residues N37 and N41 are each glycosylated (N-linked (GlcNAc...) asparagine). Residues S76 to L96 traverse the membrane as a helical segment. Topologically, residues R97 to S108 are cytoplasmic. Residues W109 to G129 traverse the membrane as a helical segment. The Extracellular portion of the chain corresponds to N130 to H140. The chain crosses the membrane as a helical span at residues Y141 to L161. The Cytoplasmic segment spans residues S162–T182. The helical transmembrane segment at I183–M203 threads the bilayer. Residues Q204–H205 are Extracellular-facing. Residues L206–A226 traverse the membrane as a helical segment. The Cytoplasmic segment spans residues Y227–I271.

This sequence belongs to the DRAM/TMEM150 family.

The protein resides in the cell membrane. Regulates localization of phosphatidylinositol 4-kinase (PI4K) to the plasma membrane. This Xenopus laevis (African clawed frog) protein is Transmembrane protein 150A (tmem150a).